The primary structure comprises 604 residues: Sulfite reductase [NADPH] flavoprotein alpha-component (604 aa).

The Flavodoxin-like domain occupies 65 to 203; sequence VTILYGSQTG…AAGQWHADVL (139 aa). FMN is bound by residues 71 to 76, 118 to 121, and 154 to 163; these read SQTGNG, STHG, and LGDSSYEFFC. Residues 236–453 enclose the FAD-binding FR-type domain; that stretch reads QNPYSAEVLV…VEPNKHFRLP (218 aa). FAD-binding positions include Thr-324, Leu-358, 392-395, 410-412, and 425-428; these read RLYS, TVA, and GGAS. Residues 524–525, 530–534, and Asp-566 contribute to the NADP(+) site; these read SR and KIYVQ. Tyr-604 contacts FAD.

This sequence belongs to the NADPH-dependent sulphite reductase flavoprotein subunit CysJ family. It in the N-terminal section; belongs to the flavodoxin family. The protein in the C-terminal section; belongs to the flavoprotein pyridine nucleotide cytochrome reductase family. In terms of assembly, alpha(8)-beta(8). The alpha component is a flavoprotein, the beta component is a hemoprotein. Requires FAD as cofactor. The cofactor is FMN.

The enzyme catalyses hydrogen sulfide + 3 NADP(+) + 3 H2O = sulfite + 3 NADPH + 4 H(+). The protein operates within sulfur metabolism; hydrogen sulfide biosynthesis; hydrogen sulfide from sulfite (NADPH route): step 1/1. Functionally, component of the sulfite reductase complex that catalyzes the 6-electron reduction of sulfite to sulfide. This is one of several activities required for the biosynthesis of L-cysteine from sulfate. The flavoprotein component catalyzes the electron flow from NADPH -&gt; FAD -&gt; FMN to the hemoprotein component. The sequence is that of Sulfite reductase [NADPH] flavoprotein alpha-component from Shewanella sp. (strain ANA-3).